The primary structure comprises 137 residues: Small heat shock protein IbpA (137 aa).

In terms of domain architecture, sHSP spans 28 to 137 (TQSNGGYPPY…AMKPRRIEIK (110 aa)).

Belongs to the small heat shock protein (HSP20) family. In terms of assembly, monomer. Forms homomultimers of about 100-150 subunits at optimal growth temperatures. Conformation changes to monomers at high temperatures or high ionic concentrations.

It is found in the cytoplasm. Associates with aggregated proteins, together with IbpB, to stabilize and protect them from irreversible denaturation and extensive proteolysis during heat shock and oxidative stress. Aggregated proteins bound to the IbpAB complex are more efficiently refolded and reactivated by the ATP-dependent chaperone systems ClpB and DnaK/DnaJ/GrpE. Its activity is ATP-independent. This chain is Small heat shock protein IbpA, found in Pectobacterium atrosepticum (strain SCRI 1043 / ATCC BAA-672) (Erwinia carotovora subsp. atroseptica).